Consider the following 349-residue polypeptide: Protein RecA (349 aa).

Residue 66–73 (GPESSGKT) participates in ATP binding.

Belongs to the RecA family.

It localises to the cytoplasm. In terms of biological role, can catalyze the hydrolysis of ATP in the presence of single-stranded DNA, the ATP-dependent uptake of single-stranded DNA by duplex DNA, and the ATP-dependent hybridization of homologous single-stranded DNAs. It interacts with LexA causing its activation and leading to its autocatalytic cleavage. In Psychrobacter sp. (strain PRwf-1), this protein is Protein RecA.